A 240-amino-acid chain; its full sequence is MLPDKIIYEGKAKFIIETKDPLTVIQYFKDEVTAFNKEKYKIIEGKGTINNRISTFIMETLEKAGINTHFIKTLSEREQLVKKLKIIPLEIVVRNIAAGSFCKRFNIKEGEKLAFPIIEFFYKNDGLADPMVNENHVLYFGWLSYEEMEEIKTITIKINTVLIDLFLNAGIDLVDLKLEFGRPINDNTKITLADEISPDNCRLWDKNTHKKLDKDVFRLNLGNLKEAYLEVAKRLSVKLC.

It belongs to the SAICAR synthetase family.

The catalysed reaction is 5-amino-1-(5-phospho-D-ribosyl)imidazole-4-carboxylate + L-aspartate + ATP = (2S)-2-[5-amino-1-(5-phospho-beta-D-ribosyl)imidazole-4-carboxamido]succinate + ADP + phosphate + 2 H(+). The protein operates within purine metabolism; IMP biosynthesis via de novo pathway; 5-amino-1-(5-phospho-D-ribosyl)imidazole-4-carboxamide from 5-amino-1-(5-phospho-D-ribosyl)imidazole-4-carboxylate: step 1/2. The chain is Phosphoribosylaminoimidazole-succinocarboxamide synthase from Wolbachia sp. subsp. Brugia malayi (strain TRS).